A 581-amino-acid chain; its full sequence is Adenine deaminase (581 aa).

The protein belongs to the metallo-dependent hydrolases superfamily. Adenine deaminase family. Requires Mn(2+) as cofactor.

The catalysed reaction is adenine + H2O + H(+) = hypoxanthine + NH4(+). The sequence is that of Adenine deaminase from Brucella melitensis biotype 1 (strain ATCC 23456 / CCUG 17765 / NCTC 10094 / 16M).